The following is a 670-amino-acid chain: Outer dynein arm-docking complex subunit 1 (670 aa).

Coiled coils occupy residues 9–155 (SKEV…RYLN), 183–224 (AVRE…EQLH), and 302–381 (NFIN…IQLL). The disordered stretch occupies residues 454-473 (KMAPLQPPDTLEDPPGFEAS). Serine 517 carries the post-translational modification Phosphoserine. Disordered regions lie at residues 526-596 (AGSS…ASSG) and 616-670 (VGSS…DSRG). A compositionally biased stretch (polar residues) spans 584–596 (GHVTFGSTSASSG). The segment covering 650–670 (SSTGPASSTGPGSSTSKDSRG) has biased composition (low complexity).

It belongs to the ODA1/DCC2 family. As to quaternary structure, component of the outer dynein arm-docking complex along with ODAD2, ODAD3, ODAD4 and CLXN. Interacts with ODAD3. Interacts with ODAD4; this interaction may facilitate the recruitment and/or attachment of outer dynein arm docking complex proteins, including ODAD1, ODAD3, and ODAD4 to ciliary axonemes. Interacts with DNAH9. Interacts with MNS1. Interacts with PIERCE1 and PIERCE2; the interactions link the outer dynein arms docking complex (ODA-DC) to the internal microtubule inner proteins (MIP) in cilium axoneme. As to expression, expressed in nasal epithelial cells. Highly expressed in testis and also detected in lung, brain and kidney.

The protein localises to the cytoplasm. It localises to the cytoskeleton. Its subcellular location is the cilium axoneme. Its function is as follows. Component of the outer dynein arm-docking complex (ODA-DC) that mediates outer dynein arms (ODA) binding onto the doublet microtubule. Involved in mediating assembly of both ODAs and their axonemal docking complex onto ciliary microtubules. The sequence is that of Outer dynein arm-docking complex subunit 1 from Homo sapiens (Human).